The sequence spans 324 residues: D-alanine--D-alanine ligase (324 aa).

Positions N121–E321 constitute an ATP-grasp domain. M149–T204 lines the ATP pocket. Mg(2+) is bound by residues D275, E288, and N290.

It belongs to the D-alanine--D-alanine ligase family. It depends on Mg(2+) as a cofactor. Mn(2+) serves as cofactor.

It is found in the cytoplasm. It catalyses the reaction 2 D-alanine + ATP = D-alanyl-D-alanine + ADP + phosphate + H(+). The protein operates within cell wall biogenesis; peptidoglycan biosynthesis. In terms of biological role, cell wall formation. The protein is D-alanine--D-alanine ligase of Bacteroides thetaiotaomicron (strain ATCC 29148 / DSM 2079 / JCM 5827 / CCUG 10774 / NCTC 10582 / VPI-5482 / E50).